The chain runs to 467 residues: Glutamate--tRNA ligase (467 aa).

The 'HIGH' region motif lies at P9 to G19. The short motif at K250 to R254 is the 'KMSKS' region element. K253 contacts ATP.

It belongs to the class-I aminoacyl-tRNA synthetase family. Glutamate--tRNA ligase type 1 subfamily. As to quaternary structure, monomer.

It is found in the cytoplasm. The catalysed reaction is tRNA(Glu) + L-glutamate + ATP = L-glutamyl-tRNA(Glu) + AMP + diphosphate. Functionally, catalyzes the attachment of glutamate to tRNA(Glu) in a two-step reaction: glutamate is first activated by ATP to form Glu-AMP and then transferred to the acceptor end of tRNA(Glu). The polypeptide is Glutamate--tRNA ligase (Mesomycoplasma hyopneumoniae (strain J / ATCC 25934 / NCTC 10110) (Mycoplasma hyopneumoniae)).